The chain runs to 229 residues: Cytidylate kinase (229 aa).

15–23 (GPAASGKST) lines the ATP pocket.

This sequence belongs to the cytidylate kinase family. Type 1 subfamily.

The protein resides in the cytoplasm. It carries out the reaction CMP + ATP = CDP + ADP. The enzyme catalyses dCMP + ATP = dCDP + ADP. The protein is Cytidylate kinase of Herpetosiphon aurantiacus (strain ATCC 23779 / DSM 785 / 114-95).